Consider the following 553-residue polypeptide: PE cleavage protein A (553 aa).

A PE domain is found at 1 to 92; the sequence is MSLLVVAPEW…SAGSYSAAEA (92 aa). The active site involves Asp-293.

Belongs to the mycobacterial PE family. PGRS subfamily. Post-translationally, undergoes auto-proteolytic processing.

The protein resides in the secreted. It is found in the cell surface. Aspartic protease that processes the lipase LipY and other PE_PGRS proteins. Can also cleave itself. Cleaves LipY both inside the PE domain, before amino acid 98, and after amino acids 136 and 149. Involved in virulence. This is PE cleavage protein A from Mycobacterium marinum (strain ATCC BAA-535 / M).